We begin with the raw amino-acid sequence, 439 residues long: uncharacterized protein (439 aa).

This is an uncharacterized protein from Caenorhabditis elegans.